The following is a 262-amino-acid chain: Putative phosphatase HI_0003 (262 aa).

The Nucleophile role is filled by aspartate 9. Mg(2+) contacts are provided by aspartate 9 and asparagine 11. Phosphate is bound by residues 43–44 and lysine 189; that span reads SA. Position 212 (aspartate 212) interacts with Mg(2+). Asparagine 215 contacts phosphate.

The protein belongs to the HAD-like hydrolase superfamily. Cof family. Requires Mg(2+) as cofactor.

The protein is Putative phosphatase HI_0003 of Haemophilus influenzae (strain ATCC 51907 / DSM 11121 / KW20 / Rd).